A 162-amino-acid polypeptide reads, in one-letter code: D-aminoacyl-tRNA deacylase (162 aa).

Residues 143–144 carry the Gly-cisPro motif, important for rejection of L-amino acids motif; sequence GP.

The protein belongs to the DTD family. As to quaternary structure, homodimer.

Its subcellular location is the cytoplasm. The enzyme catalyses glycyl-tRNA(Ala) + H2O = tRNA(Ala) + glycine + H(+). It catalyses the reaction a D-aminoacyl-tRNA + H2O = a tRNA + a D-alpha-amino acid + H(+). Functionally, an aminoacyl-tRNA editing enzyme that deacylates mischarged D-aminoacyl-tRNAs. Also deacylates mischarged glycyl-tRNA(Ala), protecting cells against glycine mischarging by AlaRS. Acts via tRNA-based rather than protein-based catalysis; rejects L-amino acids rather than detecting D-amino acids in the active site. By recycling D-aminoacyl-tRNA to D-amino acids and free tRNA molecules, this enzyme counteracts the toxicity associated with the formation of D-aminoacyl-tRNA entities in vivo and helps enforce protein L-homochirality. This is D-aminoacyl-tRNA deacylase from Nitratidesulfovibrio vulgaris (strain ATCC 29579 / DSM 644 / CCUG 34227 / NCIMB 8303 / VKM B-1760 / Hildenborough) (Desulfovibrio vulgaris).